The following is a 429-amino-acid chain: 3-phosphoshikimate 1-carboxyvinyltransferase (429 aa).

3-phosphoshikimate contacts are provided by K23, S24, and R28. K23 is a phosphoenolpyruvate binding site. G95 and R123 together coordinate phosphoenolpyruvate. 3-phosphoshikimate contacts are provided by S168, Q170, D316, and K343. Q170 lines the phosphoenolpyruvate pocket. D316 serves as the catalytic Proton acceptor. R347 and R389 together coordinate phosphoenolpyruvate.

Belongs to the EPSP synthase family. In terms of assembly, monomer.

It localises to the cytoplasm. It carries out the reaction 3-phosphoshikimate + phosphoenolpyruvate = 5-O-(1-carboxyvinyl)-3-phosphoshikimate + phosphate. It functions in the pathway metabolic intermediate biosynthesis; chorismate biosynthesis; chorismate from D-erythrose 4-phosphate and phosphoenolpyruvate: step 6/7. Catalyzes the transfer of the enolpyruvyl moiety of phosphoenolpyruvate (PEP) to the 5-hydroxyl of shikimate-3-phosphate (S3P) to produce enolpyruvyl shikimate-3-phosphate and inorganic phosphate. The polypeptide is 3-phosphoshikimate 1-carboxyvinyltransferase (Bacillus thuringiensis subsp. konkukian (strain 97-27)).